The primary structure comprises 334 residues: Type II methyltransferase M.NlaIII (334 aa).

Belongs to the N(4)/N(6)-methyltransferase family.

It carries out the reaction a 2'-deoxyadenosine in DNA + S-adenosyl-L-methionine = an N(6)-methyl-2'-deoxyadenosine in DNA + S-adenosyl-L-homocysteine + H(+). Functionally, a methylase, recognizes the double-stranded sequence 5'-CATG-3', methylates A-2 on both strands and protects the DNA from cleavage by the NlaIII endonuclease. This Neisseria lactamica protein is Type II methyltransferase M.NlaIII (nlaIIIM).